The sequence spans 129 residues: Lysozyme C (129 aa).

In terms of domain architecture, C-type lysozyme spans 1–129; the sequence is KIYKRCELAA…VSTWIKDCKL (129 aa). Disulfide bonds link C6–C127, C30–C115, C64–C80, and C76–C94. Residues E35 and D52 contribute to the active site.

It belongs to the glycosyl hydrolase 22 family. As to quaternary structure, monomer.

It localises to the secreted. The enzyme catalyses Hydrolysis of (1-&gt;4)-beta-linkages between N-acetylmuramic acid and N-acetyl-D-glucosamine residues in a peptidoglycan and between N-acetyl-D-glucosamine residues in chitodextrins.. In terms of biological role, lysozymes have primarily a bacteriolytic function; those in tissues and body fluids are associated with the monocyte-macrophage system and enhance the activity of immunoagents. The protein is Lysozyme C (LYZ) of Ortalis vetula (Plain chachalaca).